A 383-amino-acid polypeptide reads, in one-letter code: Succinyl-diaminopimelate desuccinylase (383 aa).

Histidine 73 is a binding site for Zn(2+). Aspartate 75 is a catalytic residue. Aspartate 107 lines the Zn(2+) pocket. Residue glutamate 141 is the Proton acceptor of the active site. Residues glutamate 142, glutamate 170, and histidine 356 each coordinate Zn(2+).

Belongs to the peptidase M20A family. DapE subfamily. In terms of assembly, homodimer. Zn(2+) is required as a cofactor. Requires Co(2+) as cofactor.

The catalysed reaction is N-succinyl-(2S,6S)-2,6-diaminopimelate + H2O = (2S,6S)-2,6-diaminopimelate + succinate. It functions in the pathway amino-acid biosynthesis; L-lysine biosynthesis via DAP pathway; LL-2,6-diaminopimelate from (S)-tetrahydrodipicolinate (succinylase route): step 3/3. Functionally, catalyzes the hydrolysis of N-succinyl-L,L-diaminopimelic acid (SDAP), forming succinate and LL-2,6-diaminopimelate (DAP), an intermediate involved in the bacterial biosynthesis of lysine and meso-diaminopimelic acid, an essential component of bacterial cell walls. The sequence is that of Succinyl-diaminopimelate desuccinylase from Pseudomonas aeruginosa (strain ATCC 15692 / DSM 22644 / CIP 104116 / JCM 14847 / LMG 12228 / 1C / PRS 101 / PAO1).